Here is a 538-residue protein sequence, read N- to C-terminus: Syncytin-2 (538 aa).

The N-terminal stretch at 1 to 15 (MGLLLLVLILTPSLA) is a signal peptide. At 16–478 (AYRHPDFPLL…GWLNWEGTWK (463 aa)) the chain is on the extracellular side. Positions 43-46 (CWLC) match the CXXC motif. 3 cysteine pairs are disulfide-bonded: C43–C46, C43–C439, and C431–C438. N-linked (GlcNAc...) asparagine glycans are attached at residues N133, N146, N177, N220, N241, N247, N312, and N332. A fusion peptide region spans residues 354-374 (FIPLLAGLGILAGTGTGIAGI). A CKS-17 motif is present at residues 414–430 (LQNRRGLDMLTAAQGGI). The CX6CC signature appears at 431 to 439 (CLALDEKCC). An N-linked (GlcNAc...) asparagine glycan is attached at N443. A helical membrane pass occupies residues 479–499 (WFSWVLPLTGPLVSLLLLLLF). The Cytoplasmic segment spans residues 500 to 538 (GPCLLNLITQFVSSRLQAIKLQTNLSAGRHPRNIQESPF).

It belongs to the gamma type-C retroviral envelope protein family. HERV class-I FRD env subfamily. The surface and transmembrane proteins form a heterodimer. They are attached by non-covalent interactions or by a labile interchain disulfide bond. Interacts with MFSD2A. Post-translationally, specific enzymatic cleavages in vivo yield the mature SU and TM proteins. In terms of processing, the CXXC motif is highly conserved across a broad range of retroviral envelope proteins. It is thought to participate in the formation of a labile disulfide bond possibly with the CX6CC motif present in the transmembrane protein. Isomerization of the intersubunit disulfide bond to an SU intrachain disulfide bond is thought to occur upon receptor recognition in order to allow membrane fusion. In terms of tissue distribution, expressed at higher level in placenta. Expressed at lower level in adrenal, bone marrow, brain, breast, colon, kidney, lung, ovary, peripheral blood lymphocytes, prostate, skin, spleen, testis, thymus, thyroid, trachea.

The protein localises to the virion. It localises to the cell membrane. This endogenous retroviral envelope protein has retained its original fusogenic properties and participates in trophoblast fusion and the formation of a syncytium during placenta morphogenesis. The interaction with MFSD2A is apparently important for this process. Functionally, endogenous envelope proteins may have kept, lost or modified their original function during evolution but this one can still make pseudotypes with MLV, HIV-1 or SIV-1 virions and confer infectivity. Retroviral envelope proteins mediate receptor recognition and membrane fusion during early infection. The surface protein mediates receptor recognition, while the transmembrane protein anchors the envelope heterodimer to the viral membrane through one transmembrane domain. The other hydrophobic domain, called fusion peptide, mediates fusion of the viral membrane with the target cell membrane. This Homo sapiens (Human) protein is Syncytin-2 (ERVFRD-1).